A 2211-amino-acid chain; its full sequence is MALPRLTGALRSFSNVTRHDDYSEELADLTTKRTKQQEQLLKSDLTWKKIIKFVDDNLDKKEYQTVNGDLKTILQAAKQIVGAENGQEAIESGAVFLFKTFHRKECVGHDETKAIKQMFGPFPSSSATAACNATCRIASHFTEEQLTALIQMAEEQNGDNRVFFGKNIVFSFDMHDLDHSEELPVNGEADAQRIISLDYKKFLNNQLDHLKNCCDEKSDLKSLGKVDDSFLWSEVGKYLNESQGGTPGGPTTEDLCCTLYEMLASPKSGDELQNELFELLGPEGFELIEKLLQNRSVIVERSLTCQNDNKFQTLQEQCKKFIGENAKPNYGCQVTIQSEQEKLLMKQYRREEKRNARREKQAGEDGEVSGEGLLCFDPKELRLQRELALLNARSVPILGRQREVDLERIHYPHVYDSRAEAMKTSAFIGGAKVFLPESVQRENNKMYEEVKIPHSEPMPIGIEEKIVYIKDLDEIGQLAFKGMKRLNRIQSIVFETAYNTNENMLICAPTGAGKTNIAMLTVLHEIRQHVQHGVIKKDEFKIVYVAPMKALAAEMTNYFSKRLEPLGITVKELTGDMQLSKGEILRTQMLVTTPEKWDVVTRKSVGDVALSQLVKLLILDEVHLLHEDRGPVLESIVARTLRQVESTQSMIRILGLSATLPNYLDVATFLHVNPYIGLFYFDSRFRPVPLGQTFIGIKTTNKVQQLNHMDEVCYENVLKQIMAGHQVMVFVHARNATVRTAMALREKAKNNGHICHFLSPQGSDYGQAEKQVQRSRNKQLRELFPDGFSIHHAGMLRQDRSLVENLFSNGHIKVLVCTATLAWGVNLPAHAVVIKGTQIYAAKRGSFVDLGILDVMQIFGRAGRPQFDKFGEGIIITTHDKLSHYLTLLTQQNPIESQFLESLADNLNAEIALGTVTNVEEAVKWISYTYLYVRMRANPLVYGISHKAYQMDPGLEKHREQLVIEVGRKLDKARMIRFEERTGFFSSTDLGRTASHYYIKYNTIETFNELFDAHKTEGDILAIVSKAEEFEQIKVREEEIEELDTLLNDFCELPAPGGVENNYGKINILLQTYISRGELDSFSLISDSAYVAQNAARIVRALFEIALRKRWPAMTYRLLNLSKVIDKRLWGWVSPLRQFSVLPPSVLSKLEEKNLTVDKMKDMRKDEIGHMLHHVKIGLKVKQCVHQIPSIAMEATIQPITRTVLRVRLNITPDFTWNDQVHGTVGEPWWIWVEDPTNDHIYHSEYFIIQKKQVITKEPQLLVFTIPIFEPLPSQYYIRAVSDRWLGAEAVCIINFQHLILPERHPPHTELLDLQPLPVTALGHPEYEVLYKFTHFNPIQTQIFHTLYHTDCNVLLGAPTGSGKTVAAELAIFRVFNKYPTSKAVYIAPLKALVRERIEDWKVRIEEKLGKKVVELTGDVTPDMRAIAQADLIVTTPEKWDGVSRSWQNRSYVQKVSILIIDEIHLLGDERGPVLEVIVSRTNFISSHTEKPVRVVGLSTALANARDLADWLNINQMGLFNFRPSVRPVPLEVHIQGFPGQHYCPRMARMNKPAFQAIRSHSPAKPVLIFVSSRRQTRLTSLDLIAFLATEDDPKQWLKMDEREMNDIIGTVRDSNLKLTLAFGIGMHHAGLHERDRKTVEELFVNCKIQVLIATSTLAWGVNFPAHLVIVKGTEYYDGKTRRYVDYPITDVLQMMGRAGRPQFDDQGKAVILVHDIKKDFYKKFLYEPFPVESSLLDVLADHLNAEIAAGTITSKQDAMDYITWTYFFRRLIMNPTYYNLDNVSHDTMNKYLSSLVEKSLFDLECSYCIEIGEDNRTIEPLTYGRIASYYYLKHPTIGMFKDQLKPESSVEELLLILTNADEYTDLPVRHNEDQMNSELAKHLPIEVNPHSFDSSHTKTHLLLQAHFSHAILPCPDYATDTKTVLDQAIRICQAMLDVTAHHGWLVAALNITNLVQMVVQGRWIHDSSLLTVPNIEVQHLYLFQKWSQQKRKSVHGGYQGPIECLPELMAACEGKEDVFASIVDSELQTAHISQAWNFLSRLPILNVSLSIKGCWDDPAQPQNEVPVPCLTADTRDNKRWIKLHADQEYVLQIHLQRTQMGYQGKQDSKAVAPRFPKVKDEGWFLILGEVDKKELIALKRTGYVRNRNTVSVAFYTPETPGKCIYTLYLMSDSYLGMDQQYDIYLNIIPTSTSAQATTEVSDAMSYLTLK.

One can recognise a Helicase ATP-binding 1 domain in the interval 495-678 (ETAYNTNENM…FLHVNPYIGL (184 aa)). 508 to 515 (APTGAGKT) is an ATP binding site. The short motif at 620–623 (DEVH) is the DEVH box element. Residues 717–923 (VLKQIMAGHQ…GTVTNVEEAV (207 aa)) form the Helicase C-terminal 1 domain. One can recognise an SEC63 1 domain in the interval 987–1296 (STDLGRTASH…GAEAVCIINF (310 aa)). A Helicase ATP-binding 2 domain is found at 1345–1520 (HTLYHTDCNV…WLNINQMGLF (176 aa)). 1358-1365 (APTGSGKT) contributes to the ATP binding site. The DEIH box motif lies at 1462–1465 (DEIH). Positions 1553 to 1760 (PAFQAIRSHS…GTITSKQDAM (208 aa)) constitute a Helicase C-terminal 2 domain. An SEC63 2 domain is found at 1821-2184 (PLTYGRIASY…YLGMDQQYDI (364 aa)).

Belongs to the helicase family.

The protein localises to the nucleus. The protein resides in the nucleus speckle. It localises to the cytoplasm. Its subcellular location is the cytosol. The catalysed reaction is Couples ATP hydrolysis with the unwinding of duplex DNA by translocating in the 3'-5' direction.. It catalyses the reaction ATP + H2O = ADP + phosphate + H(+). In terms of biological role, 3'-5' DNA helicase involved in repair of alkylated DNA. Promotes DNA unwinding to generate single-stranded substrate needed for ALKBH3, enabling ALKBH3 to process alkylated N3-methylcytosine (3mC) within double-stranded regions. Also involved in activation of the ribosome quality control (RQC) pathway, a pathway that degrades nascent peptide chains during problematic translation. Drives the splitting of stalled ribosomes. The polypeptide is Activating signal cointegrator 1 complex subunit 3 (ascc3) (Gallus gallus (Chicken)).